The chain runs to 208 residues: Protein-L-isoaspartate O-methyltransferase (208 aa).

Residue Ser59 is part of the active site.

The protein belongs to the methyltransferase superfamily. L-isoaspartyl/D-aspartyl protein methyltransferase family.

Its subcellular location is the cytoplasm. The catalysed reaction is [protein]-L-isoaspartate + S-adenosyl-L-methionine = [protein]-L-isoaspartate alpha-methyl ester + S-adenosyl-L-homocysteine. Its function is as follows. Catalyzes the methyl esterification of L-isoaspartyl residues in peptides and proteins that result from spontaneous decomposition of normal L-aspartyl and L-asparaginyl residues. It plays a role in the repair and/or degradation of damaged proteins. This is Protein-L-isoaspartate O-methyltransferase from Vibrio vulnificus (strain CMCP6).